We begin with the raw amino-acid sequence, 314 residues long: DNA-directed RNA polymerase subunit alpha (314 aa).

Residues 1-228 (MIEFEKPNIH…EHLGLFMDIS (228 aa)) form an alpha N-terminal domain (alpha-NTD) region. The segment at 242-314 (PVAASASDSA…DMNLGFRKED (73 aa)) is alpha C-terminal domain (alpha-CTD).

This sequence belongs to the RNA polymerase alpha chain family. As to quaternary structure, homodimer. The RNAP catalytic core consists of 2 alpha, 1 beta, 1 beta' and 1 omega subunit. When a sigma factor is associated with the core the holoenzyme is formed, which can initiate transcription.

It carries out the reaction RNA(n) + a ribonucleoside 5'-triphosphate = RNA(n+1) + diphosphate. Functionally, DNA-dependent RNA polymerase catalyzes the transcription of DNA into RNA using the four ribonucleoside triphosphates as substrates. The protein is DNA-directed RNA polymerase subunit alpha of Leuconostoc mesenteroides subsp. mesenteroides (strain ATCC 8293 / DSM 20343 / BCRC 11652 / CCM 1803 / JCM 6124 / NCDO 523 / NBRC 100496 / NCIMB 8023 / NCTC 12954 / NRRL B-1118 / 37Y).